The chain runs to 453 residues: O-glucose prenyltransferase PaPT (453 aa).

Ala-95–Pro-96 provides a ligand contact to L-tryptophan. Substrate contacts are provided by Lys-210, Tyr-212, Arg-279, Lys-281, Tyr-283, Tyr-368, and Tyr-435.

This sequence belongs to the tryptophan dimethylallyltransferase family.

The protein operates within mycotoxin biosynthesis. O-glucose prenyltransferase; part of the 2 gene clusters that mediate the biosynthesis of fusicoccins, diterpene glucosides that display phytohormone-like activity and function as potent activators of plasma membrane H(+)-ATPases in plants by modifying 14-3-3 proteins and cause the plant disease constriction canker. The first step in the pathway is performed by the fusicoccadiene synthase PaFS that possesses both prenyl transferase and terpene cyclase activity, converting isopentenyl diphosphate and dimethylallyl diphosphate into geranylgeranyl diphosphate (GGDP) and successively converting GGDP into fusicocca-2,10(14)-diene, a precursor for fusicoccin H. The second step is the oxidation at the C-8 position by the cytochrome P450 monooxygenase PaP450-2 to yield fusicocca-2,10(14)-diene-8-beta-ol. The cytochrome P450 monooxygenase PaP450-1 then catalyzes the hydroxylation at the C-16 position to produce fusicocca-2,10(14)-diene-8-beta,16-diol. The dioxygenase fc-dox then catalyzes the 16-oxydation of fusicocca-2,10(14)-diene-8-beta,16-diol to yield an aldehyde (8-beta-hydroxyfusicocca-1,10(14)-dien-16-al). The short-chain dehydrogenase/reductase fc-sdr catalyzes the reduction of the aldehyde to yield fusicocca-1,10(14)-diene-8-beta,16-diol. The next step is the hydroxylation at C-9 performed by the cytochrome P450 monooxygenase PaP450-3 that leads to fusicoccin H aglycon which is glycosylated to fusicoccin H by the O-glycosyltransferase PaGT. Hydroxylation at C-12 by the cytochrome P450 monooxygenase PaP450-4 leads then to the production of fusicoccin Q and is followed by methylation by the O-methyltransferase PaMT to yield fusicoccin P. Fusicoccin P is further converted to fusicoccin J via prenylation by the O-glucose prenyltransferase PaPT. Cytochrome P450 monooxygenase PaP450-5 then performs hydroxylation at C-19 to yield dideacetyl-fusicoccin A which is acetylated to 3'-O-deacetyl-fusicoccin A by the O-acetyltransferase PaAT-2. Finally, a another acetylation by the O-acetyltransferase PaAT-1 yields fusicoccin A. The sequence is that of O-glucose prenyltransferase PaPT from Phomopsis amygdali (Fusicoccum amygdali).